Reading from the N-terminus, the 658-residue chain is A-type ATP synthase subunit I (658 aa).

A run of 7 helical transmembrane segments spans residues 383-403, 427-447, 475-495, 507-526, 530-552, 568-588, and 591-611; these read MAFV…YGII, IIMM…NGFI, ILIM…ILGA, ALGS…LYLV, IFGA…LFGL, LLAL…LTGL, and EMIP…GHIA.

It belongs to the V-ATPase 116 kDa subunit family. As to quaternary structure, has multiple subunits with at least A(3), B(3), C, D, E, F, H, I and proteolipid K(x).

Its subcellular location is the cell membrane. Component of the A-type ATP synthase that produces ATP from ADP in the presence of a proton gradient across the membrane. The protein is A-type ATP synthase subunit I of Methanothermobacter thermautotrophicus (strain ATCC 29096 / DSM 1053 / JCM 10044 / NBRC 100330 / Delta H) (Methanobacterium thermoautotrophicum).